Here is a 474-residue protein sequence, read N- to C-terminus: MLKIFNTLTKKKEIFKSIKCGEIKIYVCGITVYDLCHLGHARTFVIFDTILRYLKHYGYQVKYVRNITDIDDKIIQRAIKNNETTDHLASRMIQEMYLDLDILNILRPNYEPKVTDHIELIINFIRLLIERNHAYVTSDGNVMFSIQTVYNYGVLSCHKKNQTFTQRNIRNKMIKKDPVDFVLWKTAKSGEPYWISPWGKGRPGWHIECSAISHAFLGKHIDIHGGGSDLVFPHHENEIAQSTCAHHITVDSYVNTWIHTGMLTFNDEKMSKSLNNFFTIREIIQKYDPETIRYFLLSAHYRKPLRYSDNNIKNARLSLKHLYSALHGINFNPIVQLYDNNSEKYFISKFNNKMNNDFNFPEAYSILFEMAHALNIAKIKDHVRAKSLAAHLKYLANILGILYQDPEIYLGYNTCIKNNKQSLTVEKIRELIYMRENARKNKEWQLSDKIRKRLTEIGIILEDKPTGKTIWRYN.

Cys-28 contacts Zn(2+). Positions 30–40 (ITVYDLCHLGH) match the 'HIGH' region motif. Residues Cys-209, His-234, and Glu-238 each contribute to the Zn(2+) site. The 'KMSKS' region motif lies at 269 to 273 (KMSKS). Residue Lys-272 coordinates ATP.

Belongs to the class-I aminoacyl-tRNA synthetase family. In terms of assembly, monomer. Requires Zn(2+) as cofactor.

It is found in the cytoplasm. The enzyme catalyses tRNA(Cys) + L-cysteine + ATP = L-cysteinyl-tRNA(Cys) + AMP + diphosphate. This chain is Cysteine--tRNA ligase, found in Blochmanniella floridana.